A 237-amino-acid polypeptide reads, in one-letter code: Splicing factor U2AF 35 kDa subunit (237 aa).

Ala-2 is subject to N-acetylalanine. The C3H1-type 1 zinc finger occupies 12-40 (EKDKVNCSFYFKIGACRHGDRCSRLHNKP). Position 39 is an N6-methyllysine (Lys-39). Phosphoserine is present on residues Ser-61 and Ser-145. One can recognise an RRM domain in the interval 65 to 147 (LRCAVSDVEM…QPIHAELSPV (83 aa)). The C3H1-type 2 zinc finger occupies 149–176 (DFREACCRQYEMGECTRGGFCNFMHLKP). Arg-165 carries the post-translational modification Omega-N-methylarginine. Positions 185 to 237 (LYGRRRKKHRSRSRSRERRSRSRDRGRGGGGGGGGGRERDRRRSRDRERSGRF) are disordered. The segment covering 188 to 208 (RRRKKHRSRSRSRERRSRSRD) has biased composition (basic residues). The span at 220 to 237 (GRERDRRRSRDRERSGRF) shows a compositional bias: basic and acidic residues.

Belongs to the splicing factor SR family. As to quaternary structure, identified in the spliceosome C complex. Heterodimer with U2AF2. Interacts (via RS domain) with PHF5A (via N-terminus). Interacts with ZRANB2. Interacts with SDE2. Interacts with SF3B1.

The protein resides in the nucleus. It localises to the nucleus speckle. In terms of biological role, plays a critical role in both constitutive and enhancer-dependent splicing by mediating protein-protein interactions and protein-RNA interactions required for accurate 3'-splice site selection. Recruits U2 snRNP to the branch point. Directly mediates interactions between U2AF2 and proteins bound to the enhancers and thus may function as a bridge between U2AF2 and the enhancer complex to recruit it to the adjacent intron. The chain is Splicing factor U2AF 35 kDa subunit (U2AF1) from Bos taurus (Bovine).